Reading from the N-terminus, the 201-residue chain is Peptide deformylase 2 (201 aa).

C121 and H163 together coordinate Fe cation. E164 is an active-site residue. Position 167 (H167) interacts with Fe cation.

Belongs to the polypeptide deformylase family. Requires Fe(2+) as cofactor.

It catalyses the reaction N-terminal N-formyl-L-methionyl-[peptide] + H2O = N-terminal L-methionyl-[peptide] + formate. In terms of biological role, removes the formyl group from the N-terminal Met of newly synthesized proteins. Requires at least a dipeptide for an efficient rate of reaction. N-terminal L-methionine is a prerequisite for activity but the enzyme has broad specificity at other positions. This chain is Peptide deformylase 2, found in Prochlorococcus marinus (strain MIT 9313).